The sequence spans 760 residues: Cyclin-D-binding Myb-like transcription factor 1 (760 aa).

An interaction with CCND2 region spans residues 1 to 237 (MSTVEEDSDT…TPEEIEKLKE (237 aa)). Residues 87–170 (VTMTATTEVA…IDILMNNIER (84 aa)) form a required for transcriptional activation region. The tract at residues 87-458 (VTMTATTEVA…DNTAISSSPM (372 aa)) is required for DNA-binding. The segment at 176-760 (GIKDATEIIF…KDVEDLVNCH (585 aa)) is interaction with CCND1, CCND2 and CCND3. The Myb-like 1 domain occupies 225–263 (GKYTPEEIEKLKELRIKHGNDWATIGAALGRSASSVKDR). The region spanning 268 to 333 (KDTCNTGKWT…KWLNYLNWKQ (66 aa)) is the HTH myb-type domain. A DNA-binding region (H-T-H motif) is located at residues 306-329 (WAAVAERVGTRSEKQCRSKWLNYL). One can recognise a Myb-like 2 domain in the interval 339–388 (WTKEDEINLILRIAELDVADENDINWDLLAEGWSSVRSPQWLRSKWWTIK). Disordered stretches follow at residues 414–435 (KNNPTLLENKSGSGVPNSNTNS) and 738–760 (IGSSLGSPVSEDSKDVEDLVNCH). The tract at residues 459 to 760 (AALQIPVQIT…KDVEDLVNCH (302 aa)) is required for transcriptional activation.

It belongs to the DMTF1 family. As to quaternary structure, interacts with the D-type cyclins CCND1, CCND2 and CCND3. Interaction with D-type cyclins may modulate transcriptional activation by this protein. Post-translationally, phosphorylated by the cyclin-D2/CDK4, cyclin-D3/CDK4 and cyclin-D2/CDK6 complexes and to a lesser extent by the cyclin-D1/CDK4 complex. Expressed at relatively low levels in colonic mucosa, ovary, peripheral leukocytes, prostate and small intestine, and at higher levels in spleen, testis and thymus. Expressed in multiple regions of the brain and CNS including amygdala, caudate, corpus callosum, hippocampus, substantia nigra and subthalamic nucleus. Isoform 1 is the predominant isoform in monocytes, macrophages and neutrophils, isoform 2 is most strongly expressed in peripheral blood leukocytes and quiescent CD34 positive cells, and isoform 3 is expressed at low levels in all hematopoietic cell types. Expression is frequently reduced in non-small-cell lung carcinomas (NSCLC) due to hemizygous gene deletion, strongly suggesting that this locus is haploinsufficient for tumor suppression. Loss of this locus frequently occurs in tumors which retain wild-type CDKN2A/ARF and p53/TP53 loci. Hemizygous gene deletion has also been observed in leukemic blasts from patients with abnormalities of the long arm of chromosome 7.

It is found in the nucleus. In terms of biological role, transcriptional activator which activates the CDKN2A/ARF locus in response to Ras-Raf signaling, thereby promoting p53/TP53-dependent growth arrest. Binds to the consensus sequence 5'-CCCG[GT]ATGT-3'. Isoform 1 may cooperate with MYB to activate transcription of the ANPEP gene. Isoform 2 may antagonize transcriptional activation by isoform 1. The chain is Cyclin-D-binding Myb-like transcription factor 1 (DMTF1) from Homo sapiens (Human).